The primary structure comprises 512 residues: Alpha-amylase (512 aa).

Positions 1–15 (MKLFVLIALFGLGFA) are cleaved as a signal peptide. 3 disulfides stabilise this stretch: cysteine 43-cysteine 101, cysteine 85-cysteine 130, and cysteine 156-cysteine 175. Residues asparagine 115, arginine 173, and aspartate 182 each coordinate Ca(2+). Chloride is bound at residue arginine 210. Catalysis depends on aspartate 212, which acts as the Nucleophile. Position 216 (histidine 216) interacts with Ca(2+). Glutamate 248 (proton donor) is an active-site residue. Arginine 352 contributes to the chloride binding site. Disulfide bonds link cysteine 394-cysteine 400 and cysteine 466-cysteine 478. An N-linked (GlcNAc...) asparagine glycan is attached at asparagine 496.

This sequence belongs to the glycosyl hydrolase 13 family. It depends on Ca(2+) as a cofactor. Requires chloride as cofactor.

The protein resides in the secreted. It carries out the reaction Endohydrolysis of (1-&gt;4)-alpha-D-glucosidic linkages in polysaccharides containing three or more (1-&gt;4)-alpha-linked D-glucose units.. In terms of biological role, catalyzes the hydrolysis of alpha-1,4 glycosidic linkages in starch, glycogen and similar oligosaccharides. In Oryzias latipes (Japanese rice fish), this protein is Alpha-amylase.